Here is a 157-residue protein sequence, read N- to C-terminus: Protein Smg (157 aa).

The protein belongs to the Smg family.

This is Protein Smg from Escherichia coli O7:K1 (strain IAI39 / ExPEC).